The chain runs to 337 residues: 5-formaminoimidazole-4-carboxamide-1-(beta)-D-ribofuranosyl 5'-monophosphate synthetase (337 aa).

5-amino-1-(5-phospho-beta-D-ribosyl)imidazole-4-carboxamide contacts are provided by histidine 23 and serine 87. One can recognise an ATP-grasp domain in the interval methionine 121–lysine 328. Residues proline 144 to tyrosine 191 and glutamate 213 each bind ATP. Asparagine 233 contributes to the 5-amino-1-(5-phospho-beta-D-ribosyl)imidazole-4-carboxamide binding site. Mg(2+) contacts are provided by glutamate 272 and glutamate 285.

The protein belongs to the phosphohexose mutase family. The cofactor is Mg(2+). Requires Mn(2+) as cofactor.

The catalysed reaction is 5-amino-1-(5-phospho-beta-D-ribosyl)imidazole-4-carboxamide + formate + ATP = 5-formamido-1-(5-phospho-D-ribosyl)imidazole-4-carboxamide + ADP + phosphate. It functions in the pathway purine metabolism; IMP biosynthesis via de novo pathway; 5-formamido-1-(5-phospho-D-ribosyl)imidazole-4-carboxamide from 5-amino-1-(5-phospho-D-ribosyl)imidazole-4-carboxamide (formate route): step 1/1. Functionally, catalyzes the ATP- and formate-dependent formylation of 5-aminoimidazole-4-carboxamide-1-beta-d-ribofuranosyl 5'-monophosphate (AICAR) to 5-formaminoimidazole-4-carboxamide-1-beta-d-ribofuranosyl 5'-monophosphate (FAICAR) in the absence of folates. In Caldivirga maquilingensis (strain ATCC 700844 / DSM 13496 / JCM 10307 / IC-167), this protein is 5-formaminoimidazole-4-carboxamide-1-(beta)-D-ribofuranosyl 5'-monophosphate synthetase.